We begin with the raw amino-acid sequence, 1060 residues long: Valine--tRNA ligase, mitochondrial (1060 aa).

A mitochondrion-targeting transit peptide spans 1–15; sequence MPHLPLASFRPPLWG. The tract at residues 25-50 is disordered; the sequence is PQALCTQPEPHGSPVSRRNREAKQKR. The 'HIGH' region motif lies at 146-156; the sequence is PNVTGSLHIGH. Residue Lys-548 is modified to N6-acetyllysine. Residues 659-663 carry the 'KMSKS' region motif; the sequence is KMSKS. Position 662 (Lys-662) interacts with ATP.

Belongs to the class-I aminoacyl-tRNA synthetase family.

The protein resides in the mitochondrion. It catalyses the reaction tRNA(Val) + L-valine + ATP = L-valyl-tRNA(Val) + AMP + diphosphate. Functionally, catalyzes the attachment of valine to tRNA(Val) in a two-step reaction: valine is first activated by ATP to form Val-AMP and then transferred to the acceptor end of tRNA(Val). The polypeptide is Valine--tRNA ligase, mitochondrial (Vars2) (Mus musculus (Mouse)).